The following is a 285-amino-acid chain: MGQKIHPTGFRLPVTRNWSSRWYANNRNFAGMLAEDIEVREFLKKKLKNAAVSRVTIERPAKNARITIYSARPGVVIGKKGEDIENLKLELAKMLKVPVAVNIEEVRKPEVDAQLIAESITQQLEKRIMFRRAMKRAMQNAMRLGAQGIKIMSAGRLNGIEIARTEWYREGRVPLHTLRADIDYGTAEAKTTYGVIGVKVWVYRGDRLANGDAPVMRGEDRPEDDRRRRNPRGDRPGDRRGPGAGRGGPGAGRGPADGASAAPSGDAKPGVKRVVRAAPPAAKGE.

The 69-residue stretch at 39-107 (VREFLKKKLK…PVAVNIEEVR (69 aa)) folds into the KH type-2 domain. The interval 211–285 (GDAPVMRGED…RAAPPAAKGE (75 aa)) is disordered. A compositionally biased stretch (basic and acidic residues) spans 217–241 (RGEDRPEDDRRRRNPRGDRPGDRRG). Residues 242–255 (PGAGRGGPGAGRGP) show a composition bias toward gly residues. 2 stretches are compositionally biased toward low complexity: residues 256 to 267 (ADGASAAPSGDA) and 276 to 285 (RAAPPAAKGE).

This sequence belongs to the universal ribosomal protein uS3 family. Part of the 30S ribosomal subunit. Forms a tight complex with proteins S10 and S14.

Functionally, binds the lower part of the 30S subunit head. Binds mRNA in the 70S ribosome, positioning it for translation. The sequence is that of Small ribosomal subunit protein uS3 from Leptothrix cholodnii (strain ATCC 51168 / LMG 8142 / SP-6) (Leptothrix discophora (strain SP-6)).